Consider the following 156-residue polypeptide: Ribosomal RNA large subunit methyltransferase H (156 aa).

S-adenosyl-L-methionine contacts are provided by residues Leu-73, Gly-104, and 123–128 (LSPLTL).

This sequence belongs to the RNA methyltransferase RlmH family. In terms of assembly, homodimer.

It is found in the cytoplasm. It catalyses the reaction pseudouridine(1915) in 23S rRNA + S-adenosyl-L-methionine = N(3)-methylpseudouridine(1915) in 23S rRNA + S-adenosyl-L-homocysteine + H(+). In terms of biological role, specifically methylates the pseudouridine at position 1915 (m3Psi1915) in 23S rRNA. The chain is Ribosomal RNA large subunit methyltransferase H from Pectobacterium atrosepticum (strain SCRI 1043 / ATCC BAA-672) (Erwinia carotovora subsp. atroseptica).